A 443-amino-acid polypeptide reads, in one-letter code: Probable D-serine dehydratase (443 aa).

An N6-(pyridoxal phosphate)lysine modification is found at K118.

The protein belongs to the serine/threonine dehydratase family. DsdA subfamily. Pyridoxal 5'-phosphate is required as a cofactor.

It carries out the reaction D-serine = pyruvate + NH4(+). This chain is Probable D-serine dehydratase, found in Aeromonas salmonicida (strain A449).